We begin with the raw amino-acid sequence, 433 residues long: sn-glycerol-3-phosphate-binding periplasmic protein UgpB (433 aa).

Positions 1–25 (MFTRLITTSALTGAIALTIGSQAFA) are cleaved as a signal peptide. Sn-glycerol 3-phosphate is bound by residues Tyr-67, Asp-91, Ser-146, Ser-273, Gly-307, Tyr-346, and Arg-397.

Belongs to the bacterial solute-binding protein 1 family. In terms of assembly, the complex is composed of two ATP-binding proteins (UgpC), two transmembrane proteins (UgpA and UgpE) and a solute-binding protein (UgpB).

The protein localises to the periplasm. Its function is as follows. Part of the ABC transporter complex UgpBAEC involved in sn-glycerol-3-phosphate (G3P) import. Binds G3P. This Brucella suis biovar 1 (strain 1330) protein is sn-glycerol-3-phosphate-binding periplasmic protein UgpB (ugpB).